The chain runs to 10061 residues: MATH and LRR domain-containing protein PFE0570w (10061 aa).

3 disordered regions span residues 166–210 (DMDN…EKKN), 244–471 (NNSD…NDIN), and 1004–1170 (DDQK…DTSF). Polar residues predominate over residues 169 to 179 (NNPNNHVSNNG). Low complexity predominate over residues 193–205 (TSNSIHKNNNTNI). A compositionally biased stretch (basic and acidic residues) spans 270–282 (KKSDNNNDKKNDD). Low complexity predominate over residues 285–320 (NNNNNNNNNNNNNNNNNDNHVCTSNNQPNTINKQNN). Polar residues predominate over residues 328-338 (DQNGRTKITPQ). Positions 338–366 (QNVNQKEKEIKNVVKEKNNFNREEKDITN) form a coiled coil. Over residues 342 to 365 (QKEKEIKNVVKEKNNFNREEKDIT) the composition is skewed to basic and acidic residues. Residues 366–375 (NSDDYDENST) show a composition bias toward acidic residues. Composition is skewed to polar residues over residues 376–389 (DESC…TSSE) and 421–437 (VPSN…SAEN). Positions 431-469 (NVKSAENCNKEKKKKKKKKKKELNNDNKDNTLNNETMND) form a coiled coil. The segment covering 441 to 451 (EKKKKKKKKKK) has biased composition (basic residues). The span at 460–471 (NTLNNETMNDIN) shows a compositional bias: low complexity. The span at 1025 to 1037 (NEEKPNVNKEGNI) shows a compositional bias: basic and acidic residues. Residues 1047 to 1057 (NKNKNNNNNNN) are compositionally biased toward low complexity. Residues 1058–1132 (DKNDKNDKND…KKKKNGKEQN (75 aa)) are compositionally biased toward basic and acidic residues. Residues 1133–1165 (EDSTESDDESSVIDDNYIDDDSCDCDSESDSID) show a composition bias toward acidic residues. The 131-residue stretch at 1328–1458 (NGKIELYIPN…SGGLLIKGKV (131 aa)) folds into the MATH domain. The tract at residues 1651–1698 (GGNLQNEQKGDEDVKKEDVKKENVNKEEIKNGNNNNNNDENENEVDDN) is disordered. Over residues 1658–1680 (QKGDEDVKKEDVKKENVNKEEIK) the composition is skewed to basic and acidic residues. Positions 1916–1948 (NYLSNLNKVKININDLNNNIVDVNNSIHNIEKE) form a coiled coil. The segment covering 1973-1995 (HKETSSIQNKGKEKSNNNIKSDD) has biased composition (basic and acidic residues). 4 disordered regions span residues 1973–1998 (HKET…DNNN), 2155–2245 (LNKS…PSYK), 2427–2566 (YSDD…NNIK), and 3120–3139 (SNET…NEMK). Positions 2216 to 2228 (NNDDKDDDDDDSY) are enriched in acidic residues. The span at 2235-2245 (SDGKKNDPSYK) shows a compositional bias: basic and acidic residues. Positions 2475–2484 (NNNNNNNNMM) are enriched in low complexity. 2 stretches are compositionally biased toward basic and acidic residues: residues 2487-2496 (DDNKVNKNEE) and 2505-2527 (QIKE…RNED). Low complexity-rich tracts occupy residues 2552-2564 (NNNN…NNNN) and 3121-3133 (NETN…NRTN). The stretch at 2555 to 2580 (NNNNNNNNNNIKRLDDSYNKLLKNKN) forms a coiled coil. The chain crosses the membrane as a helical span at residues 3398-3418 (KLILKKIFMYLNIICMIIKYI). 3 disordered regions span residues 3802-3826 (STND…YSKK), 3847-3890 (LTSG…DNNN), and 3919-3953 (ESND…EKKS). Positions 3809–3822 (VDRSDDSESNDDKK) are enriched in basic and acidic residues. Positions 3851–3890 (NSSSKNSKKNSNNESIQMDNTNNSNSNNNNKNDNNNDNNN) are enriched in low complexity. Over residues 3926-3941 (KNQNIQSNEQSVTPNR) the composition is skewed to polar residues. Basic and acidic residues predominate over residues 3942 to 3953 (NIEENKDHEKKS). Positions 3977–4001 (EHLGNATAVLNILQKKLENEELKKL) form a coiled coil. Basic and acidic residues predominate over residues 4039 to 4065 (VSAHKEKNVKTDSSDDKKKKEDNENNN). Disordered regions lie at residues 4039–4074 (VSAH…IIHN), 4155–4180 (KGNN…NNMG), 4352–4414 (SNNN…NNNN), 4919–4943 (NKRK…DNDN), 4991–5030 (DGLN…KNEK), and 5179–5207 (SKIA…KSNL). Over residues 4157–4178 (NNSKDNNNNNNNNNNNNNNKNN) the composition is skewed to low complexity. The stretch at 4399–4424 (NNNNNNNNNNNNNNNNVNKEIIKLNS) forms a coiled coil. Low complexity-rich tracts occupy residues 4929–4943 (NNNN…DNDN), 5004–5019 (NMNN…NNSN), and 5185–5202 (NGNN…NNNN). A coiled-coil region spans residues 5006 to 5046 (NNVKNKNNNNNNSNNKRKKNEKNEKIDKIEQFLHESELEKD). 3 coiled-coil regions span residues 5486–5563 (NNNN…NIYE), 5728–5810 (DVLK…DKEE), and 5900–6022 (MNND…INNY). Basic and acidic residues-rich tracts occupy residues 5716–5732 (KDAK…VLKD), 5738–5811 (SNKE…KEEP), and 5909–5953 (NKNK…KKDN). Disordered stretches follow at residues 5716-5816 (KDAK…QINE), 5892-6009 (EIIN…KKLK), 6123-6142 (KSET…VDGK), 6299-6338 (NDSI…DKGE), 6722-6760 (NMNN…NNNI), 7585-7730 (EDML…VEEK), and 7744-7787 (DLLS…KKSS). A compositionally biased stretch (low complexity) spans 5954–5968 (NNSNNNNNNNNLSNN). The span at 5969 to 5978 (GEEDPNDSDS) shows a compositional bias: acidic residues. Basic and acidic residues predominate over residues 5991-6003 (NKNINDDSDDNNK). Residues 6129-6138 (SNKNVESNDN) show a composition bias toward polar residues. Composition is skewed to low complexity over residues 6314 to 6333 (SNSN…NNNN) and 6722 to 6759 (NMNN…NNNN). Residues 6719–6743 (NMNNMNNNNNNNNNNNNNNNNNNNN) are a coiled coil. A compositionally biased stretch (basic and acidic residues) spans 7585-7599 (EDMLHSKKTDVIQHG). The span at 7600–7685 (DEEEDDEEDD…EHINEEEQED (86 aa)) shows a compositional bias: acidic residues. Coiled coils occupy residues 7601–7637 (EEED…DIED), 7710–7813 (NTKI…NKNE), 7934–7961 (KTDE…IDNE), and 8217–8241 (NINN…GKRE). Basic residues predominate over residues 7749–7765 (SKKKNHKDKRNASKNKN). The span at 7766 to 7786 (KNKDILKKNENNINDEKEKKS) shows a compositional bias: basic and acidic residues. Disordered regions lie at residues 8189–8252 (ETGG…GGEE), 8293–8380 (GKVS…IIMS), and 8474–8497 (KKKN…MDEE). Positions 8218–8242 (INNKEKETNKNEEQQQGEAEGKREG) are enriched in basic and acidic residues. Over residues 8243 to 8252 (EGEEGEGGEE) the composition is skewed to acidic residues. Residues 8305 to 8314 (LLNDKEHEKD) are compositionally biased toward basic and acidic residues. Residues 8315–8363 (NEDNDEDNDEDDDDEDDDEDDEDDDDDDDDDDDDDDDDDYDEDYDEDYD) are compositionally biased toward acidic residues. The span at 8364–8374 (EKLVENKKNER) shows a compositional bias: basic and acidic residues. The span at 8478 to 8492 (YSNNNIYNNNSSNKV) shows a compositional bias: low complexity. Coiled coils occupy residues 8644 to 8697 (SETL…ELNN), 8882 to 8907 (QYLE…VDNY), and 9219 to 9247 (IDMK…SNNN). Disordered regions lie at residues 9759–9779 (TIPR…NNNS), 9891–9926 (SNTS…SSSN), and 9985–10061 (KNNS…NNIY). 3 stretches are compositionally biased toward low complexity: residues 9764–9779 (NTTT…NNNS), 9899–9926 (NSSN…SSSN), and 9986–10022 (NNSI…NNNT). The segment covering 10031–10041 (IFQQNQNHSDT) has biased composition (polar residues). Residues 10042-10061 (NNNNNNNNKNNSNNNNNNIY) show a composition bias toward low complexity.

The protein localises to the membrane. The polypeptide is MATH and LRR domain-containing protein PFE0570w (Plasmodium falciparum (isolate 3D7)).